The chain runs to 285 residues: Isoprenyl transferase 2 (285 aa).

Positions 11 to 30 (RREYRAPEPHPSGARAPKLP) are disordered. Residue aspartate 43 is part of the active site. Aspartate 43 is a Mg(2+) binding site. Substrate is bound by residues 44–47 (GNGR), tryptophan 48, arginine 56, histidine 60, and 88–90 (STE). The active-site Proton acceptor is the asparagine 91. Residues tryptophan 92, arginine 94, arginine 211, and 217-219 (RTS) each bind substrate. Mg(2+) is bound at residue glutamate 230.

Belongs to the UPP synthase family. As to quaternary structure, homodimer. Requires Mg(2+) as cofactor.

In terms of biological role, catalyzes the condensation of isopentenyl diphosphate (IPP) with allylic pyrophosphates generating different type of terpenoids. The polypeptide is Isoprenyl transferase 2 (Streptomyces avermitilis (strain ATCC 31267 / DSM 46492 / JCM 5070 / NBRC 14893 / NCIMB 12804 / NRRL 8165 / MA-4680)).